The sequence spans 311 residues: Geranylgeranyl transferase type-2 subunit alpha (311 aa).

The stretch at 12-43 forms a coiled coil; sequence EKAKAQRLKELEKIESYNKLVKSFEELREKQN. PFTA repeat units lie at residues 49-82, 93-126, 129-162, 164-197, and 206-239; these read ISLS…TETK, NEMK…DNCD, REMK…NIKL, DELK…YKEP, and EEFE…KSIP.

This sequence belongs to the protein prenyltransferase subunit alpha family. Heterodimer of an alpha and a beta subunit.

The enzyme catalyses geranylgeranyl diphosphate + L-cysteinyl-[protein] = S-geranylgeranyl-L-cysteinyl-[protein] + diphosphate. Functionally, catalyzes the transfer of a geranylgeranyl moiety from geranylgeranyl diphosphate to proteins with a C-terminal sequence motif -XCC or -XCXC, where both cysteines may become modified. This is Geranylgeranyl transferase type-2 subunit alpha (rabggta) from Dictyostelium discoideum (Social amoeba).